A 486-amino-acid chain; its full sequence is UDP-N-acetylmuramate--L-alanine ligase (486 aa).

126 to 132 (GTHGKTS) lines the ATP pocket.

The protein belongs to the MurCDEF family.

The protein localises to the cytoplasm. It carries out the reaction UDP-N-acetyl-alpha-D-muramate + L-alanine + ATP = UDP-N-acetyl-alpha-D-muramoyl-L-alanine + ADP + phosphate + H(+). It participates in cell wall biogenesis; peptidoglycan biosynthesis. In terms of biological role, cell wall formation. The chain is UDP-N-acetylmuramate--L-alanine ligase from Corynebacterium glutamicum (strain ATCC 13032 / DSM 20300 / JCM 1318 / BCRC 11384 / CCUG 27702 / LMG 3730 / NBRC 12168 / NCIMB 10025 / NRRL B-2784 / 534).